The chain runs to 247 residues: MAGHSKWANTKHRKAAQDAKRGKIFTKIIRELVTAARLGGGDPGSNPRLRAAIDKALSNNMTRDTLNRAIARGVGGDEDANMETIIYEGYGPGGTAVMVECLSDNRNRTVSEVRHAFTKTGGNLGTDGSVSYLFTKKGVISYAPGLDEDAVMDAALEAGADDVVTYDDGAIDVFTPWETFGNVKDALDAAGLKAESAEVSMIPSTKADMDAETAPKLMRLIDMLEDCDDVQEVYHNGEISDEVAELL.

The protein belongs to the TACO1 family.

The protein localises to the cytoplasm. In Pectobacterium carotovorum subsp. carotovorum (strain PC1), this protein is Probable transcriptional regulatory protein PC1_1817.